A 535-amino-acid chain; its full sequence is uncharacterized protein (535 aa).

WD repeat units lie at residues 189–226 (RDDF…TRVL), 228–267 (ESIY…PRIS), 269–314 (HHPG…AVLV), 320–359 (AHDE…QPLY), 362–404 (QQNA…KIDE), and 462–505 (VHSV…SWHN).

Belongs to the WD repeat CDC20/Fizzy family.

This is an uncharacterized protein from Schizosaccharomyces pombe (strain 972 / ATCC 24843) (Fission yeast).